The following is a 583-amino-acid chain: uncharacterized protein (583 aa).

24 to 140 (ILADIDDEQL…SAMLRAMARM (117 aa)) is an a nucleoside 3',5'-cyclic phosphate binding site. The PNPLA domain maps to 309–469 (LVMAGGGARG…LNNLPANVMC (161 aa)). Positions 313–318 (GGGARG) match the GXGXXG motif. A GXSXG motif is present at residues 340–344 (GTSSG). The active-site Nucleophile is the Ser-342. The Proton acceptor role is filled by Asp-456. Positions 456–458 (DGG) match the DGA/G motif.

It belongs to the NTE family.

This is an uncharacterized protein from Mycobacterium tuberculosis (strain CDC 1551 / Oshkosh).